Here is an 86-residue protein sequence, read N- to C-terminus: RNA-binding protein Hfq (86 aa).

One can recognise a Sm domain in the interval Asp9–Ile68.

The protein belongs to the Hfq family. Homohexamer.

Its function is as follows. RNA chaperone that binds small regulatory RNA (sRNAs) and mRNAs to facilitate mRNA translational regulation in response to envelope stress, environmental stress and changes in metabolite concentrations. Also binds with high specificity to tRNAs. This Pseudomonas savastanoi pv. phaseolicola (strain 1448A / Race 6) (Pseudomonas syringae pv. phaseolicola (strain 1448A / Race 6)) protein is RNA-binding protein Hfq.